Here is a 260-residue protein sequence, read N- to C-terminus: ICLGGLGKVTLAPAPGQTNWPFWLTVTSNDPVVACLASQYAGWSLSHEKFFALGSGPGRSLARKEPLFQELPYEDSASRATIVLEAGAPPPEPVVAKVAESCGVSPDKLAFIYAPTQSLAGSVQVVGRVLEVALHKAHELKFPLEHIVDGIATAPLSPPHPDFVTAMGRTNDAIIYSGRAHLFVRGSAEAAKALAEKLPSSNSRDYGRPFAEIFKAYKGEFYKIDPSLFSPAEAIVTAVETGETFRAGAIDEKLLDASFG.

The protein belongs to the MCH family.

Its subcellular location is the cytoplasm. It catalyses the reaction 5,10-methenyl-5,6,7,8-tetrahydromethanopterin + H2O = N(5)-formyl-5,6,7,8-tetrahydromethanopterin + H(+). The protein operates within one-carbon metabolism; formaldehyde degradation; formate from formaldehyde (H(4)MPT route): step 3/5. Catalyzes the hydrolysis of methenyl-H(4)MPT(+) to 5-formyl-H(4)MPT. This Methylosinus trichosporium protein is Methenyltetrahydromethanopterin cyclohydrolase (mch).